The sequence spans 284 residues: MEMO1 family protein YN1551_0739 (284 aa).

This sequence belongs to the MEMO1 family.

The protein is MEMO1 family protein YN1551_0739 of Saccharolobus islandicus (strain Y.N.15.51 / Yellowstone #2) (Sulfolobus islandicus).